We begin with the raw amino-acid sequence, 519 residues long: Iroquois-class homeodomain protein IRX-4 (519 aa).

Positions 143-204 (GTRRKNATRE…NARRRLKKEN (62 aa)) form a DNA-binding region, homeobox; TALE-type. The interval 204–298 (NKMTWPPRNK…VPAAPDGPVK (95 aa)) is disordered. Positions 213–222 (KCADEKRPYA) are enriched in basic and acidic residues. Composition is skewed to acidic residues over residues 223–235 (EGEE…EEAR) and 257–267 (LSDLDDFDPLE).

Belongs to the TALE/IRO homeobox family. In terms of assembly, interacts with the vitamin D receptor VDR but doesn't affect its transactivation activity. In terms of tissue distribution, predominantly expressed in cardiac ventricles.

The protein localises to the nucleus. Likely to be an important mediator of ventricular differentiation during cardiac development. This chain is Iroquois-class homeodomain protein IRX-4 (IRX4), found in Homo sapiens (Human).